Reading from the N-terminus, the 152-residue chain is Small ribosomal subunit protein uS15 (152 aa).

The protein belongs to the universal ribosomal protein uS15 family. In terms of assembly, part of the 30S ribosomal subunit.

The chain is Small ribosomal subunit protein uS15 from Methanocorpusculum labreanum (strain ATCC 43576 / DSM 4855 / Z).